A 198-amino-acid polypeptide reads, in one-letter code: Na(+)-translocating NADH-quinone reductase subunit E (198 aa).

The next 6 helical transmembrane spans lie at 11–31 (SVFIENMALSFFLGMCTFLAV), 35–55 (VSTAFGLGIAVIVVLGISVPV), 77–97 (FLNFITFIGVIAALVQILEMF), 110–130 (GIFLPLITVNCAIFGGVSFMV), 140–160 (VVYGIGAGTGWMLAIVALAGL), and 176–196 (LGITFITVGLMALGFMSFSGI).

The protein belongs to the NqrDE/RnfAE family. In terms of assembly, composed of six subunits; NqrA, NqrB, NqrC, NqrD, NqrE and NqrF.

It localises to the cell inner membrane. The enzyme catalyses a ubiquinone + n Na(+)(in) + NADH + H(+) = a ubiquinol + n Na(+)(out) + NAD(+). NQR complex catalyzes the reduction of ubiquinone-1 to ubiquinol by two successive reactions, coupled with the transport of Na(+) ions from the cytoplasm to the periplasm. NqrA to NqrE are probably involved in the second step, the conversion of ubisemiquinone to ubiquinol. The chain is Na(+)-translocating NADH-quinone reductase subunit E from Mannheimia succiniciproducens (strain KCTC 0769BP / MBEL55E).